We begin with the raw amino-acid sequence, 285 residues long: Para-Rep C6 (285 aa).

A CRESS-DNA virus Rep endonuclease domain is found at 3-99 (TRQSTSWVFT…VAGPWEYGLF (97 aa)). Residues 10–13 (VFTL) carry the RCR-1 motif. The a divalent metal cation site is built by glutamate 36 and histidine 42. The RCR-2 motif lies at 42-44 (HLQ). A Nuclear localization signal motif is present at residues 52–74 (RNTTLRQAKYIFNGLNPHLEIAR). Tyrosine 82 (for DNA cleavage activity) is an active-site residue. Residues 82-85 (YAMK) carry the RCR-3 motif. Residue aspartate 87 participates in a divalent metal cation binding. The Nuclear localization signal motif lies at 99–105 (FIKRGSH). 175–183 (GPAGNEGKS) provides a ligand contact to ATP.

It belongs to the nanoviridea/circoviridae replication-associated protein family. As to quaternary structure, homooligomer (Potential). Rep binds to repeated DNA motifs (iterons). Mg(2+) serves as cofactor. Requires Mn(2+) as cofactor.

The protein resides in the host nucleus. The enzyme catalyses ATP + H2O = ADP + phosphate + H(+). In terms of biological role, initiates and terminates the replication only of its own subviral DNA molecule. The closed circular ssDNA genome is first converted to a superhelical dsDNA. Rep binds a specific hairpin at the genome origin of replication. Introduces an endonucleolytic nick within the intergenic region of the genome, thereby initiating the rolling circle replication (RCR). Following cleavage, binds covalently to the 5'-phosphate of DNA as a tyrosyl ester. The cleavage gives rise to a free 3'-OH that serves as a primer for the cellular DNA polymerase. The polymerase synthesizes the (+) strand DNA by rolling circle mechanism. After one round of replication, a Rep-catalyzed nucleotidyl transfer reaction releases a circular single-stranded virus genome, thereby terminating the replication. Displays origin-specific DNA cleavage, nucleotidyl transferase, ATPase and helicase activities. This chain is Para-Rep C6 (C6), found in Subterranean clover stunt C6 alphasatellite (SCSC6A).